The chain runs to 1793 residues: Nucleoporin NUP145 (1793 aa).

GLFG repeat units follow at residues 50–53 (GLFG), 143–146 (GLFG), 255–258 (GLFG), 282–285 (GLFG), 292–295 (GLFG), 306–309 (GLFG), 336–339 (GLFG), 381–384 (GLFG), and 395–398 (GLFG). 4 disordered regions span residues 404–583 (GSAF…QQPQ), 740–859 (RTDL…EPGA), 999–1043 (GDDD…DDTF), and 1066–1097 (EVAN…PEDE). A compositionally biased stretch (polar residues) spans 417–431 (NQSTGTSLFGNTQQK). 5 GLFG repeats span residues 434 to 437 (GLFG), 446 to 449 (GLFG), 470 to 473 (GLFG), 481 to 484 (GLFG), and 496 to 499 (GLFG). Low complexity predominate over residues 437-459 (GSTTTNTSGGLFGSTNTGTSTFG). A compositionally biased stretch (gly residues) spans 467–483 (TGGGLFGSKPAGTGGLF). Positions 500 to 511 (NLNTNAQTQQPA) are enriched in polar residues. One copy of the GLFG 15 repeat lies at 514 to 517 (GLFG). Over residues 518–535 (NLGQNNQAKPSLFGTSTT) the composition is skewed to low complexity. A GLFG 16 repeat occupies 539–542 (GLFG). 2 stretches are compositionally biased toward polar residues: residues 546–575 (AQQQ…FGSS) and 801–813 (STAN…NGAK). Residues 814–823 (SSPVAAASPP) show a composition bias toward low complexity. Residues 826 to 840 (EQVKGKELAVVHEEE) show a composition bias toward basic and acidic residues. Residues 857–993 (PGAYWMSPTA…GVWAFSVEHF (137 aa)) enclose the Peptidase S59 domain. Positions 859–992 (AYWMSPTADD…TGVWAFSVEH (134 aa)) are nucleoporin RNA-binding motif (NRM). Residues 999–1013 (GDDDDYDDDDYETEP) show a composition bias toward acidic residues. Low complexity predominate over residues 1025–1037 (TSPSISKSSTSPI).

It belongs to the nucleoporin GLFG family. In terms of assembly, component of the nuclear pore complex (NPC). NPC constitutes the exclusive means of nucleocytoplasmic transport. NPCs allow the passive diffusion of ions and small molecules and the active, nuclear transport receptor-mediated bidirectional transport of macromolecules such as proteins, RNAs, ribonucleoparticles (RNPs), and ribosomal subunits across the nuclear envelope. Due to its 8-fold rotational symmetry, all subunits are present with 8 copies or multiples thereof. Post-translationally, NUP145 is autocatalytically cleaved in NUP145N and NUP145C.

The protein resides in the nucleus. It localises to the nuclear pore complex. The protein localises to the nucleus membrane. Its function is as follows. Functions as a component of the nuclear pore complex (NPC). NPC components, collectively referred to as nucleoporins (NUPs), can play the role of both NPC structural components and of docking or interaction partners for transiently associated nuclear transport factors. Active directional transport is assured by both, a Phe-Gly (FG) repeat affinity gradient for these transport factors across the NPC and a transport cofactor concentration gradient across the nuclear envelope. NUP145 is autocatalytically cleaved in vivo in 2 polypeptides which assume different functions in the NPC. NUP145N as one of the FG repeat nucleoporins participates in karyopherin interactions and contains part of the autocatalytic cleavage activity. NUP145C as part of the NUP84 complex is involved in nuclear poly(A)+ RNA and tRNA export. The polypeptide is Nucleoporin NUP145 (NUP145) (Chaetomium thermophilum (strain DSM 1495 / CBS 144.50 / IMI 039719) (Thermochaetoides thermophila)).